The following is an 89-amino-acid chain: Small ribosomal subunit protein uS15 (89 aa).

The protein belongs to the universal ribosomal protein uS15 family. In terms of assembly, part of the 30S ribosomal subunit. Forms a bridge to the 50S subunit in the 70S ribosome, contacting the 23S rRNA.

In terms of biological role, one of the primary rRNA binding proteins, it binds directly to 16S rRNA where it helps nucleate assembly of the platform of the 30S subunit by binding and bridging several RNA helices of the 16S rRNA. Functionally, forms an intersubunit bridge (bridge B4) with the 23S rRNA of the 50S subunit in the ribosome. The chain is Small ribosomal subunit protein uS15 from Serratia proteamaculans (strain 568).